Here is a 1170-residue protein sequence, read N- to C-terminus: Probable mRNA-capping enzyme (1170 aa).

Lysine 292 functions as the N6-GMP-lysine intermediate in the catalytic mechanism. One can recognise an mRNA cap 0 methyltransferase domain in the interval 684 to 1007; it reads SNAAGMRAFN…LNRYYVFRKT (324 aa). 693 to 694 contributes to the mRNA binding site; that stretch reads NN. Residues lysine 697, glycine 715, aspartate 737, and 813-815 each bind S-adenosyl-L-methionine; that span reads QFT.

It in the N-terminal section; belongs to the dsDNA virus mRNA guanylyltransferase family. This sequence in the C-terminal section; belongs to the class I-like SAM-binding methyltransferase superfamily. mRNA cap 0 methyltransferase family.

The protein resides in the virion. The catalysed reaction is a 5'-end triphospho-ribonucleoside in mRNA + H2O = a 5'-end diphospho-ribonucleoside in mRNA + phosphate + H(+). The enzyme catalyses a 5'-end diphospho-ribonucleoside in mRNA + GTP + H(+) = a 5'-end (5'-triphosphoguanosine)-ribonucleoside in mRNA + diphosphate. It carries out the reaction a 5'-end (5'-triphosphoguanosine)-ribonucleoside in mRNA + S-adenosyl-L-methionine = a 5'-end (N(7)-methyl 5'-triphosphoguanosine)-ribonucleoside in mRNA + S-adenosyl-L-homocysteine. It functions in the pathway mRNA processing; mRNA capping. In terms of biological role, responsible for methylating the 5'-cap structure of mRNAs. The sequence is that of Probable mRNA-capping enzyme from Acanthamoeba polyphaga mimivirus (APMV).